The primary structure comprises 192 residues: Peptidyl-tRNA hydrolase (192 aa).

Tyr17 contributes to the tRNA binding site. Residue His22 is the Proton acceptor of the active site. TRNA is bound by residues Phe68, Asn70, and Asn116.

This sequence belongs to the PTH family. Monomer.

It localises to the cytoplasm. It catalyses the reaction an N-acyl-L-alpha-aminoacyl-tRNA + H2O = an N-acyl-L-amino acid + a tRNA + H(+). Functionally, hydrolyzes ribosome-free peptidyl-tRNAs (with 1 or more amino acids incorporated), which drop off the ribosome during protein synthesis, or as a result of ribosome stalling. In terms of biological role, catalyzes the release of premature peptidyl moieties from peptidyl-tRNA molecules trapped in stalled 50S ribosomal subunits, and thus maintains levels of free tRNAs and 50S ribosomes. In Xylella fastidiosa (strain M12), this protein is Peptidyl-tRNA hydrolase.